Here is a 1364-residue protein sequence, read N- to C-terminus: Trifunctional purine biosynthetic protein adenosine-3 (1364 aa).

The ATP-grasp domain maps to 114–321; sequence KDFMLRHGIP…LFEVMQACCS (208 aa). Residue 140–202 coordinates ATP; it reads IRSAPYQALV…EELLEGEEIS (63 aa). The Mn(2+) site is built by Glu-291 and Asn-293. The AIRS stretch occupies residues 435–1154; the sequence is AIATAPGLSY…ARTQRMLSQP (720 aa). Residues 1155–1364 are GART; it reads RKRVAVLISG…EAPKDIKDSQ (210 aa). A N(1)-(5-phospho-beta-D-ribosyl)glycinamide-binding site is contributed by 1166-1168; that stretch reads GSN. Residues Arg-1221, 1246 to 1249, and Asn-1263 contribute to the (6R)-10-formyltetrahydrofolate site; that span reads MRIL. Residue His-1265 is the Proton donor of the active site. 1297–1301 lines the (6R)-10-formyltetrahydrofolate pocket; that stretch reads DEGVD. 1327–1330 serves as a coordination point for N(1)-(5-phospho-beta-D-ribosyl)glycinamide; the sequence is HYAE.

It in the N-terminal section; belongs to the GARS family. In the central section; belongs to the AIR synthase family. The protein in the C-terminal section; belongs to the GART family.

It catalyses the reaction 5-phospho-beta-D-ribosylamine + glycine + ATP = N(1)-(5-phospho-beta-D-ribosyl)glycinamide + ADP + phosphate + H(+). The catalysed reaction is 2-formamido-N(1)-(5-O-phospho-beta-D-ribosyl)acetamidine + ATP = 5-amino-1-(5-phospho-beta-D-ribosyl)imidazole + ADP + phosphate + H(+). The enzyme catalyses N(1)-(5-phospho-beta-D-ribosyl)glycinamide + (6R)-10-formyltetrahydrofolate = N(2)-formyl-N(1)-(5-phospho-beta-D-ribosyl)glycinamide + (6S)-5,6,7,8-tetrahydrofolate + H(+). Its pathway is purine metabolism; IMP biosynthesis via de novo pathway; 5-amino-1-(5-phospho-D-ribosyl)imidazole from N(2)-formyl-N(1)-(5-phospho-D-ribosyl)glycinamide: step 2/2. The protein operates within purine metabolism; IMP biosynthesis via de novo pathway; N(1)-(5-phospho-D-ribosyl)glycinamide from 5-phospho-alpha-D-ribose 1-diphosphate: step 2/2. It functions in the pathway purine metabolism; IMP biosynthesis via de novo pathway; N(2)-formyl-N(1)-(5-phospho-D-ribosyl)glycinamide from N(1)-(5-phospho-D-ribosyl)glycinamide (10-formyl THF route): step 1/1. Trifunctional enzyme required for de novo purine biosynthesis. The polypeptide is Trifunctional purine biosynthetic protein adenosine-3 (ade3) (Drosophila pseudoobscura pseudoobscura (Fruit fly)).